Consider the following 328-residue polypeptide: tRNA uridine(34) hydroxylase (328 aa).

A Rhodanese domain is found at 130 to 224 (LDEDTVVLDT…YGKDPEVQGE (95 aa)). Cysteine 184 functions as the Cysteine persulfide intermediate in the catalytic mechanism.

It belongs to the TrhO family.

The catalysed reaction is uridine(34) in tRNA + AH2 + O2 = 5-hydroxyuridine(34) in tRNA + A + H2O. Functionally, catalyzes oxygen-dependent 5-hydroxyuridine (ho5U) modification at position 34 in tRNAs. In Streptococcus pyogenes serotype M49 (strain NZ131), this protein is tRNA uridine(34) hydroxylase.